A 67-amino-acid chain; its full sequence is ATP synthase protein 8 (67 aa).

A helical membrane pass occupies residues 8–24 (TWFITILATILTLFIIM). Lysine 54 is modified (N6-acetyllysine; alternate). An N6-succinyllysine; alternate modification is found at lysine 54. Lysine 57 is subject to N6-acetyllysine.

Belongs to the ATPase protein 8 family. As to quaternary structure, F-type ATPases have 2 components, CF(1) - the catalytic core - and CF(0) - the membrane proton channel. Component of an ATP synthase complex composed of ATP5PB, ATP5MC1, ATP5F1E, ATP5PD, ATP5ME, ATP5PF, ATP5MF, MT-ATP6, MT-ATP8, ATP5F1A, ATP5F1B, ATP5F1D, ATP5F1C, ATP5PO, ATP5MG, ATP5MK and ATP5MJ. Interacts with PRICKLE3.

The protein resides in the mitochondrion membrane. In terms of biological role, mitochondrial membrane ATP synthase (F(1)F(0) ATP synthase or Complex V) produces ATP from ADP in the presence of a proton gradient across the membrane which is generated by electron transport complexes of the respiratory chain. F-type ATPases consist of two structural domains, F(1) - containing the extramembraneous catalytic core and F(0) - containing the membrane proton channel, linked together by a central stalk and a peripheral stalk. During catalysis, ATP synthesis in the catalytic domain of F(1) is coupled via a rotary mechanism of the central stalk subunits to proton translocation. Part of the complex F(0) domain. Minor subunit located with subunit a in the membrane. The chain is ATP synthase protein 8 (MT-ATP8) from Artibeus jamaicensis (Jamaican fruit-eating bat).